The sequence spans 212 residues: Ras-related protein Rab-2A (212 aa).

N-acetylalanine is present on Ala2. Positions 2–19 (AYAYLFKYIIIGDTGVGK) are required for interaction with PRKCI. GTP-binding residues include Gly16, Val17, Gly18, Lys19, Ser20, Cys21, and Thr38. Ser20 is a binding site for Mg(2+). Residues 37–42 (LTIGVE) carry the Switch 1 motif. The Mg(2+) site is built by Thr38 and Asp61. Residues 63–72 (AGQESFRSIT) carry the Switch 2 motif. GTP-binding residues include Gly64, Asn119, Lys120, Asp122, Ala150, and Lys151. 2 S-geranylgeranyl cysteine lipidation sites follow: Cys211 and Cys212.

Belongs to the small GTPase superfamily. Rab family. In terms of assembly, interacts with PRKCI. Interacts with TRIP11. Interacts (in GTP-bound form) with GARIN1B. Interacts (GTP-bound) with HOPS complex component VPS39; interaction contributes to obtaining a functional HOPS complex that promotes autophagosome-lysosome membrane fusion driven by STX17-SNAP29-VAMP8. May interact with VPS41. Mg(2+) is required as a cofactor. Post-translationally, prenylated. Prenylation is required for association with cellular membranes.

The protein localises to the endoplasmic reticulum-Golgi intermediate compartment membrane. The protein resides in the melanosome. It is found in the endoplasmic reticulum membrane. Its subcellular location is the golgi apparatus membrane. It localises to the cytoplasmic vesicle. The protein localises to the secretory vesicle. The protein resides in the acrosome. It is found in the autophagosome membrane. The enzyme catalyses GTP + H2O = GDP + phosphate + H(+). Regulated by guanine nucleotide exchange factors (GEFs) which promote the exchange of bound GDP for free GTP, GTPase activating proteins (GAPs) which increase the GTP hydrolysis activity, and GDP dissociation inhibitors (GDIs) which inhibit the dissociation of the nucleotide from the GTPase. Its function is as follows. The small GTPases Rab are key regulators of intracellular membrane trafficking, from the formation of transport vesicles to their fusion with membranes. Rabs cycle between active GTP-bound and inactive GDP-bound states. In their active state, drive transport of vesicular carriers from donor organelles to acceptor organelles to regulate the membrane traffic that maintains organelle identity and morphology. RAB2A regulates autophagy by promoting autophagosome-lysosome fusion via recruitment of the HOPS endosomal tethering complex; this process involves autophagosomal RAB2A and lysosomal RAB39A recruitment of HOPS subcomplexes VPS39-VPS11 and VPS41-VPS16-VPS18-VPS33A, respectively, which assemble into a functional complex to mediate membrane tethering and SNAREs-driven membrane fusion. Required for protein transport from the endoplasmic reticulum to the Golgi complex. Regulates the compacted morphology of the Golgi. Together with RAB2B, redundantly required for efficient autophagic flux. The protein is Ras-related protein Rab-2A (RAB2A) of Canis lupus familiaris (Dog).